We begin with the raw amino-acid sequence, 160 residues long: Large ribosomal subunit protein uL22c (160 aa).

This sequence belongs to the universal ribosomal protein uL22 family. As to quaternary structure, part of the 50S ribosomal subunit.

The protein localises to the plastid. It is found in the chloroplast. Its function is as follows. This protein binds specifically to 23S rRNA. Functionally, the globular domain of the protein is located near the polypeptide exit tunnel on the outside of the subunit, while an extended beta-hairpin is found that lines the wall of the exit tunnel in the center of the 70S ribosome. The polypeptide is Large ribosomal subunit protein uL22c (rpl22) (Panax ginseng (Korean ginseng)).